A 26-amino-acid chain; its full sequence is Thrombin-like enzyme LmrSP-3 (26 aa).

This sequence belongs to the peptidase S1 family. Snake venom subfamily. In terms of tissue distribution, expressed by the venom gland.

It is found in the secreted. Functionally, thrombin-like snake venom serine protease that cleaves alpha-chain of fibrinogen (FGA) releases only fibrinopeptide A. Shows coagulant, esterase and amidase activities. The protein is Thrombin-like enzyme LmrSP-3 of Lachesis muta rhombeata (Bushmaster).